The sequence spans 328 residues: MRIIFWGTPEYSISSLDIFIKSKHEVIAVVSQPDKKRSRGKKLISSPVKSFAEQESIKIYTPEKIRDNINFINELKSLSCDLFIVIAYGKILPKEILEIPKFGCWNAHASLLPRWRGAAPIQWSLMKGDEFTGVGIMKMNEGLDTGDLLLEEKIKIDNNDNLITLTEKLSILSAKLFLNATSLLEENINKNTNYQLTKQNTLGREITYARMIEKSDYKVDWGNEAIKISRKIKALYPRANTTFRGKNLKIIKIKVLSSDEINNEKYCLMSNYSKPGIILAVLENEGIIISTKTDPIILLEAKLEGKNISSKKQLIQQLKPSLGEYLSN.

A (6S)-5,6,7,8-tetrahydrofolate-binding site is contributed by 110 to 113; the sequence is SLLP.

Belongs to the Fmt family.

It carries out the reaction L-methionyl-tRNA(fMet) + (6R)-10-formyltetrahydrofolate = N-formyl-L-methionyl-tRNA(fMet) + (6S)-5,6,7,8-tetrahydrofolate + H(+). Its function is as follows. Attaches a formyl group to the free amino group of methionyl-tRNA(fMet). The formyl group appears to play a dual role in the initiator identity of N-formylmethionyl-tRNA by promoting its recognition by IF2 and preventing the misappropriation of this tRNA by the elongation apparatus. In Prochlorococcus marinus (strain MIT 9312), this protein is Methionyl-tRNA formyltransferase.